The chain runs to 319 residues: Dehydrogenase/reductase SDR family member 9 (319 aa).

The signal sequence occupies residues 1-17; it reads MLFWLLVLLILCGFLWN. Residues 34-58 and aspartate 83 each bind NAD(+); that span reads ITGCDTGFGNLAARTFDKKGFHVIA. Serine 164 is a substrate binding site. Tyrosine 176 functions as the Proton acceptor in the catalytic mechanism. Lysine 180 lines the NAD(+) pocket.

This sequence belongs to the short-chain dehydrogenases/reductases (SDR) family. Homotetramer.

It localises to the microsome membrane. The protein localises to the endoplasmic reticulum membrane. The catalysed reaction is 3beta-hydroxy-5alpha-pregnane-20-one + NAD(+) = 5alpha-pregnane-3,20-dione + NADH + H(+). The enzyme catalyses 17beta-hydroxy-5alpha-androstan-3-one + NAD(+) = 5alpha-androstan-3,17-dione + NADH + H(+). It catalyses the reaction androsterone + NAD(+) = 5alpha-androstan-3,17-dione + NADH + H(+). It carries out the reaction 5alpha-androstane-3alpha,17beta-diol + NAD(+) = 17beta-hydroxy-5alpha-androstan-3-one + NADH + H(+). The catalysed reaction is all-trans-retinol + NAD(+) = all-trans-retinal + NADH + H(+). The enzyme catalyses 3alpha-hydroxy-5alpha-pregnan-20-one + NAD(+) = 5alpha-pregnane-3,20-dione + NADH + H(+). Functionally, 3-alpha-hydroxysteroid dehydrogenase that converts 3-alpha-tetrahydroprogesterone (allopregnanolone) to dihydroxyprogesterone and 3-alpha-androstanediol to dihydroxyprogesterone. Also plays a role in the biosynthesis of retinoic acid from retinaldehyde. Can utilize both NADH and NADPH. The polypeptide is Dehydrogenase/reductase SDR family member 9 (DHRS9) (Bos taurus (Bovine)).